Reading from the N-terminus, the 76-residue chain is DNA-directed RNA polymerase subunit omega (76 aa).

This sequence belongs to the RNA polymerase subunit omega family. In cyanobacteria the RNAP catalytic core is composed of 2 alpha, 1 beta, 1 beta', 1 gamma and 1 omega subunit. When a sigma factor is associated with the core the holoenzyme is formed, which can initiate transcription.

The enzyme catalyses RNA(n) + a ribonucleoside 5'-triphosphate = RNA(n+1) + diphosphate. Functionally, promotes RNA polymerase assembly. Latches the N- and C-terminal regions of the beta' subunit thereby facilitating its interaction with the beta and alpha subunits. This Synechococcus elongatus (strain ATCC 33912 / PCC 7942 / FACHB-805) (Anacystis nidulans R2) protein is DNA-directed RNA polymerase subunit omega.